The sequence spans 90 residues: UPF0297 protein ABC1593 (90 aa).

The protein belongs to the UPF0297 family.

The sequence is that of UPF0297 protein ABC1593 from Shouchella clausii (strain KSM-K16) (Alkalihalobacillus clausii).